Here is a 660-residue protein sequence, read N- to C-terminus: Bifunctional polymyxin resistance protein ArnA (660 aa).

The interval 1 to 304 is formyltransferase ArnAFT; it reads MKTVVFAYHD…TLGLVQGSRL (304 aa). (6R)-10-formyltetrahydrofolate is bound at residue 86-88; it reads HLI. The Proton donor; for formyltransferase activity role is filled by His-104. Residues Arg-114 and 136 to 140 each bind (6R)-10-formyltetrahydrofolate; that span reads VKRAD. Residues 314–660 form a dehydrogenase ArnADH region; it reads RRTRVLILGV…RTVDLTDKPS (347 aa). NAD(+)-binding positions include Asp-347 and 368–369; that span reads DI. Residues Ala-393, Tyr-398, and 432 to 433 each bind UDP-alpha-D-glucuronate; that span reads TS. The active-site Proton acceptor; for decarboxylase activity is Glu-434. UDP-alpha-D-glucuronate contacts are provided by residues Arg-460, Asn-492, 526-535, and Tyr-613; that span reads KLIDGGKQKR. Arg-619 (proton donor; for decarboxylase activity) is an active-site residue.

In the N-terminal section; belongs to the Fmt family. UDP-L-Ara4N formyltransferase subfamily. It in the C-terminal section; belongs to the NAD(P)-dependent epimerase/dehydratase family. UDP-glucuronic acid decarboxylase subfamily. In terms of assembly, homohexamer, formed by a dimer of trimers.

It carries out the reaction UDP-alpha-D-glucuronate + NAD(+) = UDP-beta-L-threo-pentopyranos-4-ulose + CO2 + NADH. The enzyme catalyses UDP-4-amino-4-deoxy-beta-L-arabinose + (6R)-10-formyltetrahydrofolate = UDP-4-deoxy-4-formamido-beta-L-arabinose + (6S)-5,6,7,8-tetrahydrofolate + H(+). Its pathway is nucleotide-sugar biosynthesis; UDP-4-deoxy-4-formamido-beta-L-arabinose biosynthesis; UDP-4-deoxy-4-formamido-beta-L-arabinose from UDP-alpha-D-glucuronate: step 1/3. The protein operates within nucleotide-sugar biosynthesis; UDP-4-deoxy-4-formamido-beta-L-arabinose biosynthesis; UDP-4-deoxy-4-formamido-beta-L-arabinose from UDP-alpha-D-glucuronate: step 3/3. It functions in the pathway bacterial outer membrane biogenesis; lipopolysaccharide biosynthesis. Functionally, bifunctional enzyme that catalyzes the oxidative decarboxylation of UDP-glucuronic acid (UDP-GlcUA) to UDP-4-keto-arabinose (UDP-Ara4O) and the addition of a formyl group to UDP-4-amino-4-deoxy-L-arabinose (UDP-L-Ara4N) to form UDP-L-4-formamido-arabinose (UDP-L-Ara4FN). The modified arabinose is attached to lipid A and is required for resistance to polymyxin and cationic antimicrobial peptides. The protein is Bifunctional polymyxin resistance protein ArnA of Escherichia coli (strain SMS-3-5 / SECEC).